A 129-amino-acid chain; its full sequence is Large ribosomal subunit protein bL12c (129 aa).

This sequence belongs to the bacterial ribosomal protein bL12 family. As to quaternary structure, homodimer. Part of the ribosomal stalk of the 50S ribosomal subunit. Forms a multimeric L10(L12)X complex, where L10 forms an elongated spine to which 2 to 4 L12 dimers bind in a sequential fashion. Binds GTP-bound translation factors.

Its subcellular location is the plastid. The protein localises to the chloroplast. Functionally, forms part of the ribosomal stalk which helps the ribosome interact with GTP-bound translation factors. Is thus essential for accurate translation. The polypeptide is Large ribosomal subunit protein bL12c (Oltmannsiellopsis viridis (Marine flagellate)).